The sequence spans 227 residues: ATP-dependent dethiobiotin synthetase BioD (227 aa).

Residue 13-18 (DIGKTY) coordinates ATP. A Mg(2+)-binding site is contributed by T17. The active site involves K38. S42 is a substrate binding site. ATP contacts are provided by residues D55, 116–119 (EGSG), and 179–180 (NN). Residues D55 and E116 each coordinate Mg(2+).

This sequence belongs to the dethiobiotin synthetase family. As to quaternary structure, homodimer. Mg(2+) serves as cofactor.

It is found in the cytoplasm. The catalysed reaction is (7R,8S)-7,8-diammoniononanoate + CO2 + ATP = (4R,5S)-dethiobiotin + ADP + phosphate + 3 H(+). Its pathway is cofactor biosynthesis; biotin biosynthesis; biotin from 7,8-diaminononanoate: step 1/2. Its function is as follows. Catalyzes a mechanistically unusual reaction, the ATP-dependent insertion of CO2 between the N7 and N8 nitrogen atoms of 7,8-diaminopelargonic acid (DAPA, also called 7,8-diammoniononanoate) to form a ureido ring. The chain is ATP-dependent dethiobiotin synthetase BioD from Clostridium botulinum (strain Langeland / NCTC 10281 / Type F).